The sequence spans 469 residues: A-type ATP synthase subunit B (469 aa).

The protein belongs to the ATPase alpha/beta chains family. Has multiple subunits with at least A(3), B(3), C, D, E, F, H, I and proteolipid K(x).

It localises to the cell membrane. In terms of biological role, component of the A-type ATP synthase that produces ATP from ADP in the presence of a proton gradient across the membrane. The B chain is a regulatory subunit. The sequence is that of A-type ATP synthase subunit B from Staphylothermus marinus (strain ATCC 43588 / DSM 3639 / JCM 9404 / F1).